Consider the following 335-residue polypeptide: MIEFQRLHKSYSVDGRQIVALHPLDLRIGPGEVFGIIGHSGAGKSTLIRLINRLEEPSGGRLLIGDEDVTALDSQGLRALRRRIGMIFQHFNLLSSRTVAGNVAFPLELVGTPRAEIDARVAELLARVGLQEQANQYPAQLSGGQKQRVGIARALATGPQILLCDEATSALDPQTTASVLQLLAQINRELGLTIVLITHEMDVIRRVCDRVAVLDAGKLVETGPVTEVFLHPKHVTTRRFVSEAEHLDEAELHRDFAAVGGRIVRLTFLGNGTYEPVLGRIARDTGVDYNILSGRVDRIKDTPYGQLIVALTGGDQTAARAGFVAAGVQVEDLRV.

Residues 2–241 (IEFQRLHKSY…PKHVTTRRFV (240 aa)) enclose the ABC transporter domain. 38-45 (GHSGAGKS) contacts ATP.

The protein belongs to the ABC transporter superfamily. Methionine importer (TC 3.A.1.24) family. The complex is composed of two ATP-binding proteins (MetN), two transmembrane proteins (MetI) and a solute-binding protein (MetQ).

It localises to the cell inner membrane. The catalysed reaction is L-methionine(out) + ATP + H2O = L-methionine(in) + ADP + phosphate + H(+). The enzyme catalyses D-methionine(out) + ATP + H2O = D-methionine(in) + ADP + phosphate + H(+). Part of the ABC transporter complex MetNIQ involved in methionine import. Responsible for energy coupling to the transport system. In Xanthomonas oryzae pv. oryzae (strain MAFF 311018), this protein is Methionine import ATP-binding protein MetN.